The following is an 812-amino-acid chain: Fibrous sheath CABYR-binding protein (812 aa).

Residues methionine 1–alanine 66 are disordered. A phosphoserine mark is found at serine 25, serine 57, serine 125, serine 133, serine 184, and serine 273. 4 disordered regions span residues isoleucine 269 to threonine 333, aspartate 367 to serine 388, phenylalanine 424 to leucine 547, and proline 672 to lysine 741. Over residues alanine 275–lysine 286 the composition is skewed to low complexity. Residues glutamate 488–proline 501 are compositionally biased toward pro residues. Residues valine 502–proline 513 are compositionally biased toward low complexity. Residues glutamate 514–glutamate 528 are compositionally biased toward acidic residues.

As to quaternary structure, interacts with CABYR.

Its subcellular location is the cell projection. It localises to the cilium. It is found in the flagellum. In terms of biological role, may be involved in the later stages of fibrous sheath biogenesis. Binds calcium. The polypeptide is Fibrous sheath CABYR-binding protein (Rattus norvegicus (Rat)).